The chain runs to 335 residues: Nuclear transcription factor Y subunit gamma (335 aa).

Belongs to the NFYC/HAP5 subunit family. As to quaternary structure, heterotrimeric transcription factor composed of three components, NF-YA, NF-YB and NF-YC. NF-YB and NF-YC must interact and dimerize for NF-YA association and DNA binding.

The protein resides in the nucleus. In terms of biological role, component of the sequence-specific heterotrimeric transcription factor (NF-Y) which specifically recognizes a 5'-CCAAT-3' box motif found in the promoters of its target genes. NF-Y can function as both an activator and a repressor, depending on its interacting cofactors. This chain is Nuclear transcription factor Y subunit gamma (Nfyc), found in Rattus norvegicus (Rat).